The sequence spans 252 residues: 5'-nucleotidase SurE (252 aa).

The a divalent metal cation site is built by Asp-8, Asp-9, Ser-39, and Asn-96.

This sequence belongs to the SurE nucleotidase family. Requires a divalent metal cation as cofactor.

Its subcellular location is the cytoplasm. The catalysed reaction is a ribonucleoside 5'-phosphate + H2O = a ribonucleoside + phosphate. Its function is as follows. Nucleotidase that shows phosphatase activity on nucleoside 5'-monophosphates. The protein is 5'-nucleotidase SurE of Petrotoga mobilis (strain DSM 10674 / SJ95).